Here is a 271-residue protein sequence, read N- to C-terminus: Formamidopyrimidine-DNA glycosylase (271 aa).

Residue P2 is the Schiff-base intermediate with DNA of the active site. E3 (proton donor) is an active-site residue. K58 functions as the Proton donor; for beta-elimination activity in the catalytic mechanism. The DNA site is built by H92, R111, and R152. The FPG-type zinc finger occupies 237-271 (MVYGREGEACRHCGGELKHATIGQRATVWCAACQR). The active-site Proton donor; for delta-elimination activity is R261.

This sequence belongs to the FPG family. Monomer. The cofactor is Zn(2+).

The catalysed reaction is Hydrolysis of DNA containing ring-opened 7-methylguanine residues, releasing 2,6-diamino-4-hydroxy-5-(N-methyl)formamidopyrimidine.. The enzyme catalyses 2'-deoxyribonucleotide-(2'-deoxyribose 5'-phosphate)-2'-deoxyribonucleotide-DNA = a 3'-end 2'-deoxyribonucleotide-(2,3-dehydro-2,3-deoxyribose 5'-phosphate)-DNA + a 5'-end 5'-phospho-2'-deoxyribonucleoside-DNA + H(+). In terms of biological role, involved in base excision repair of DNA damaged by oxidation or by mutagenic agents. Acts as a DNA glycosylase that recognizes and removes damaged bases. Has a preference for oxidized purines, such as 7,8-dihydro-8-oxoguanine (8-oxoG). Has AP (apurinic/apyrimidinic) lyase activity and introduces nicks in the DNA strand. Cleaves the DNA backbone by beta-delta elimination to generate a single-strand break at the site of the removed base with both 3'- and 5'-phosphates. The chain is Formamidopyrimidine-DNA glycosylase from Xanthomonas campestris pv. campestris (strain ATCC 33913 / DSM 3586 / NCPPB 528 / LMG 568 / P 25).